Reading from the N-terminus, the 104-residue chain is SPbeta prophage-derived stress response protein SCP1 (104 aa).

The protein resides in the cytoplasm. The chain is SPbeta prophage-derived stress response protein SCP1 (yorD) from Bacillus subtilis (strain 168).